A 61-amino-acid polypeptide reads, in one-letter code: Small ribosomal subunit protein uS14 (61 aa).

Residues Cys-24, Cys-27, Cys-40, and Cys-43 each coordinate Zn(2+).

The protein belongs to the universal ribosomal protein uS14 family. Zinc-binding uS14 subfamily. In terms of assembly, part of the 30S ribosomal subunit. Contacts proteins S3 and S10. Zn(2+) serves as cofactor.

Functionally, binds 16S rRNA, required for the assembly of 30S particles and may also be responsible for determining the conformation of the 16S rRNA at the A site. In Thermoanaerobacter sp. (strain X514), this protein is Small ribosomal subunit protein uS14.